Reading from the N-terminus, the 923-residue chain is Smoothelin (923 aa).

A2 bears the N-acetylalanine mark. Positions 24–89 (LAERRRIRSA…ARLAGRLESM (66 aa)) form a coiled coil. A disordered region spans residues 134–456 (SRLPSSGPRE…GTGEPGGSMK (323 aa)). Composition is skewed to low complexity over residues 164–179 (QEQQ…TPED) and 192–205 (RAPP…PASP). The segment covering 237 to 252 (LPHPSEAPSPEPPMSP) has biased composition (pro residues). Composition is skewed to polar residues over residues 272 to 285 (PSDT…FSNT) and 293 to 314 (TKSC…NREP). Phosphoserine is present on residues S299, S301, S304, and S340. T359 and T372 each carry phosphothreonine. Residues 366–389 (PSLISTTPASSSSSNSSSPSPSDT) show a composition bias toward low complexity. Phosphoserine is present on residues S501, S521, and S574. 2 disordered regions span residues 542–578 (KMEP…PLSA) and 615–772 (QRKR…ARKA). The stretch at 601–628 (EERKLIRAALRELRQRKRDQRDKERERR) forms a coiled coil. A compositionally biased stretch (basic and acidic residues) spans 615-638 (QRKRDQRDKERERRLREARARPGE). The residue at position 641 (S641) is a Phosphoserine. The segment covering 674 to 687 (NDGTQTARTTTVES) has biased composition (polar residues). Positions 697–721 (SSSSSTTTTTVQTKSFSSSSSSSSS) are enriched in low complexity. Residue S735 is modified to Phosphoserine. Over residues 744–756 (LERRQAEKKKELM) the composition is skewed to basic and acidic residues. Residue S798 is modified to Phosphoserine. A Calponin-homology (CH) domain is found at 805 to 912 (NSIKQMLLDW…YVQSLYNHLR (108 aa)).

It belongs to the smoothelin family.

Its subcellular location is the cytoplasm. The protein resides in the cytoskeleton. Functionally, structural protein of the cytoskeleton. The protein is Smoothelin (Smtn) of Mus musculus (Mouse).